The sequence spans 177 residues: Large ribosomal subunit protein uL6 (177 aa).

This sequence belongs to the universal ribosomal protein uL6 family. In terms of assembly, part of the 50S ribosomal subunit.

This protein binds to the 23S rRNA, and is important in its secondary structure. It is located near the subunit interface in the base of the L7/L12 stalk, and near the tRNA binding site of the peptidyltransferase center. This Idiomarina loihiensis (strain ATCC BAA-735 / DSM 15497 / L2-TR) protein is Large ribosomal subunit protein uL6.